The primary structure comprises 457 residues: Multidrug resistance protein MdtK (457 aa).

12 helical membrane-spanning segments follow: residues 11 to 31 (LLAL…MGVV), 53 to 73 (IWLP…PIIA), 93 to 113 (WLAI…KFLI), 127 to 147 (AVGF…YQVL), 160 to 180 (GMVI…IFIY), 188 to 208 (LGGV…FLLM), 243 to 263 (LPIA…ALLI), 280 to 300 (FSSL…IRVG), 316 to 336 (YTGI…SIIL), 357 to 377 (LMLF…GAGV), 387 to 407 (IFYI…YILG), and 418 to 438 (PQGF…MIFA).

Belongs to the multi antimicrobial extrusion (MATE) (TC 2.A.66.1) family. MdtK subfamily.

It is found in the cell inner membrane. Its function is as follows. Multidrug efflux pump that functions probably as a Na(+)/drug antiporter. The polypeptide is Multidrug resistance protein MdtK (Photorhabdus laumondii subsp. laumondii (strain DSM 15139 / CIP 105565 / TT01) (Photorhabdus luminescens subsp. laumondii)).